A 491-amino-acid polypeptide reads, in one-letter code: Aspartyl/glutamyl-tRNA(Asn/Gln) amidotransferase subunit B (491 aa).

This sequence belongs to the GatB/GatE family. GatB subfamily. In terms of assembly, heterotrimer of A, B and C subunits.

It carries out the reaction L-glutamyl-tRNA(Gln) + L-glutamine + ATP + H2O = L-glutaminyl-tRNA(Gln) + L-glutamate + ADP + phosphate + H(+). It catalyses the reaction L-aspartyl-tRNA(Asn) + L-glutamine + ATP + H2O = L-asparaginyl-tRNA(Asn) + L-glutamate + ADP + phosphate + 2 H(+). In terms of biological role, allows the formation of correctly charged Asn-tRNA(Asn) or Gln-tRNA(Gln) through the transamidation of misacylated Asp-tRNA(Asn) or Glu-tRNA(Gln) in organisms which lack either or both of asparaginyl-tRNA or glutaminyl-tRNA synthetases. The reaction takes place in the presence of glutamine and ATP through an activated phospho-Asp-tRNA(Asn) or phospho-Glu-tRNA(Gln). This chain is Aspartyl/glutamyl-tRNA(Asn/Gln) amidotransferase subunit B, found in Burkholderia lata (strain ATCC 17760 / DSM 23089 / LMG 22485 / NCIMB 9086 / R18194 / 383).